The chain runs to 477 residues: 3-isopropylmalate dehydratase large subunit (477 aa).

3 residues coordinate [4Fe-4S] cluster: cysteine 351, cysteine 411, and cysteine 414.

It belongs to the aconitase/IPM isomerase family. LeuC type 1 subfamily. In terms of assembly, heterodimer of LeuC and LeuD. [4Fe-4S] cluster is required as a cofactor.

It carries out the reaction (2R,3S)-3-isopropylmalate = (2S)-2-isopropylmalate. The protein operates within amino-acid biosynthesis; L-leucine biosynthesis; L-leucine from 3-methyl-2-oxobutanoate: step 2/4. Its function is as follows. Catalyzes the isomerization between 2-isopropylmalate and 3-isopropylmalate, via the formation of 2-isopropylmaleate. The protein is 3-isopropylmalate dehydratase large subunit of Kineococcus radiotolerans (strain ATCC BAA-149 / DSM 14245 / SRS30216).